Consider the following 257-residue polypeptide: NAD-capped RNA hydrolase NudC (257 aa).

Residues K25 and R69 each contribute to the substrate site. Residues C98 and C101 each coordinate Zn(2+). E111 serves as a coordination point for substrate. The Zn(2+) site is built by C116 and C119. Y124 provides a ligand contact to substrate. In terms of domain architecture, Nudix hydrolase spans 125–248; the sequence is PQIAPCIIVA…TVARRLIEDT (124 aa). A divalent metal cation-binding residues include A158, E174, and E178. Residues 159 to 180 carry the Nudix box motif; it reads GFVEVGETLEQAVAREVMEESG. 192–199 is a binding site for substrate; that stretch reads QPWPFPQS. E219 is an a divalent metal cation binding site. A241 is a substrate binding site.

Belongs to the Nudix hydrolase family. NudC subfamily. As to quaternary structure, homodimer. Mg(2+) serves as cofactor. Requires Mn(2+) as cofactor. It depends on Zn(2+) as a cofactor.

The catalysed reaction is a 5'-end NAD(+)-phospho-ribonucleoside in mRNA + H2O = a 5'-end phospho-adenosine-phospho-ribonucleoside in mRNA + beta-nicotinamide D-ribonucleotide + 2 H(+). The enzyme catalyses NAD(+) + H2O = beta-nicotinamide D-ribonucleotide + AMP + 2 H(+). It carries out the reaction NADH + H2O = reduced beta-nicotinamide D-ribonucleotide + AMP + 2 H(+). Functionally, mRNA decapping enzyme that specifically removes the nicotinamide adenine dinucleotide (NAD) cap from a subset of mRNAs by hydrolyzing the diphosphate linkage to produce nicotinamide mononucleotide (NMN) and 5' monophosphate mRNA. The NAD-cap is present at the 5'-end of some mRNAs and stabilizes RNA against 5'-processing. Has preference for mRNAs with a 5'-end purine. Catalyzes the hydrolysis of a broad range of dinucleotide pyrophosphates. This is NAD-capped RNA hydrolase NudC from Shigella boydii serotype 18 (strain CDC 3083-94 / BS512).